The following is a 227-amino-acid chain: MAYPFQLGLQDATSPIMEELTNFHDHTLMIVFLISSLVLYIISLMLTTKLTHTSTMDAQEVETIWTILPAVILILIALPSLRILYMMDEINNPALTVKTMGHQWYWSYEYTDYEDLCFDSYMIPTTDLKPGELRLLEVDNRVVLPMELPIRMLISSEDVLHSWAVPSLGLKTDAIPGRLNQATVTSNRPGLFYGQCSEICGSNHSFMPIVLEMVPLKYFENWSASMI.

Topologically, residues 1–14 (MAYPFQLGLQDATS) are mitochondrial intermembrane. The helical transmembrane segment at 15-45 (PIMEELTNFHDHTLMIVFLISSLVLYIISLM) threads the bilayer. The Mitochondrial matrix portion of the chain corresponds to 46 to 59 (LTTKLTHTSTMDAQ). The chain crosses the membrane as a helical span at residues 60–87 (EVETIWTILPAVILILIALPSLRILYMM). Topologically, residues 88 to 227 (DEINNPALTV…YFENWSASMI (140 aa)) are mitochondrial intermembrane. Residues His-161, Cys-196, Glu-198, Cys-200, His-204, and Met-207 each coordinate Cu cation. Glu-198 is a binding site for Mg(2+). The residue at position 218 (Tyr-218) is a Phosphotyrosine.

The protein belongs to the cytochrome c oxidase subunit 2 family. Component of the cytochrome c oxidase (complex IV, CIV), a multisubunit enzyme composed of 14 subunits. The complex is composed of a catalytic core of 3 subunits MT-CO1, MT-CO2 and MT-CO3, encoded in the mitochondrial DNA, and 11 supernumerary subunits COX4I, COX5A, COX5B, COX6A, COX6B, COX6C, COX7A, COX7B, COX7C, COX8 and NDUFA4, which are encoded in the nuclear genome. The complex exists as a monomer or a dimer and forms supercomplexes (SCs) in the inner mitochondrial membrane with NADH-ubiquinone oxidoreductase (complex I, CI) and ubiquinol-cytochrome c oxidoreductase (cytochrome b-c1 complex, complex III, CIII), resulting in different assemblies (supercomplex SCI(1)III(2)IV(1) and megacomplex MCI(2)III(2)IV(2)). Found in a complex with TMEM177, COA6, COX18, COX20, SCO1 and SCO2. Interacts with TMEM177 in a COX20-dependent manner. Interacts with COX20. Interacts with COX16. The cofactor is Cu cation.

The protein localises to the mitochondrion inner membrane. The catalysed reaction is 4 Fe(II)-[cytochrome c] + O2 + 8 H(+)(in) = 4 Fe(III)-[cytochrome c] + 2 H2O + 4 H(+)(out). Functionally, component of the cytochrome c oxidase, the last enzyme in the mitochondrial electron transport chain which drives oxidative phosphorylation. The respiratory chain contains 3 multisubunit complexes succinate dehydrogenase (complex II, CII), ubiquinol-cytochrome c oxidoreductase (cytochrome b-c1 complex, complex III, CIII) and cytochrome c oxidase (complex IV, CIV), that cooperate to transfer electrons derived from NADH and succinate to molecular oxygen, creating an electrochemical gradient over the inner membrane that drives transmembrane transport and the ATP synthase. Cytochrome c oxidase is the component of the respiratory chain that catalyzes the reduction of oxygen to water. Electrons originating from reduced cytochrome c in the intermembrane space (IMS) are transferred via the dinuclear copper A center (CU(A)) of subunit 2 and heme A of subunit 1 to the active site in subunit 1, a binuclear center (BNC) formed by heme A3 and copper B (CU(B)). The BNC reduces molecular oxygen to 2 water molecules using 4 electrons from cytochrome c in the IMS and 4 protons from the mitochondrial matrix. The sequence is that of Cytochrome c oxidase subunit 2 (MT-CO2) from Oenomys hypoxanthus (Rufous-nosed rat).